A 150-amino-acid chain; its full sequence is Small ribosomal subunit protein eS19S (150 aa).

This sequence belongs to the eukaryotic ribosomal protein eS19 family.

In Ascaris suum (Pig roundworm), this protein is Small ribosomal subunit protein eS19S (RPS19S).